The chain runs to 156 residues: 3-dehydroquinate dehydratase (156 aa).

Tyrosine 24 serves as the catalytic Proton acceptor. Substrate contacts are provided by asparagine 76, histidine 82, and aspartate 89. Histidine 102 (proton donor) is an active-site residue. Residues 103-104 and arginine 113 each bind substrate; that span reads IS.

The protein belongs to the type-II 3-dehydroquinase family. In terms of assembly, homododecamer.

The enzyme catalyses 3-dehydroquinate = 3-dehydroshikimate + H2O. The protein operates within metabolic intermediate biosynthesis; chorismate biosynthesis; chorismate from D-erythrose 4-phosphate and phosphoenolpyruvate: step 3/7. In terms of biological role, catalyzes a trans-dehydration via an enolate intermediate. The polypeptide is 3-dehydroquinate dehydratase (Nitrobacter winogradskyi (strain ATCC 25391 / DSM 10237 / CIP 104748 / NCIMB 11846 / Nb-255)).